The primary structure comprises 794 residues: Lon protease (794 aa).

The Lon N-terminal domain occupies 29–222 (VPLLPLRGVL…TLISIIQDEQ (194 aa)). 374 to 381 (GPPGVGKT) serves as a coordination point for ATP. Positions 610–791 (TDQVGMATGL…DEVLEHALVG (182 aa)) constitute a Lon proteolytic domain. Active-site residues include serine 697 and lysine 740.

It belongs to the peptidase S16 family. In terms of assembly, homohexamer. Organized in a ring with a central cavity.

It is found in the cytoplasm. The catalysed reaction is Hydrolysis of proteins in presence of ATP.. In terms of biological role, ATP-dependent serine protease that mediates the selective degradation of mutant and abnormal proteins as well as certain short-lived regulatory proteins. Required for cellular homeostasis and for survival from DNA damage and developmental changes induced by stress. Degrades polypeptides processively to yield small peptide fragments that are 5 to 10 amino acids long. Binds to DNA in a double-stranded, site-specific manner. This chain is Lon protease, found in Bacillus thuringiensis (strain Al Hakam).